A 354-amino-acid polypeptide reads, in one-letter code: (R,R)-butanediol dehydrogenase (354 aa).

The 341-residue stretch at 10–350 folds into the Enoyl reductase (ER) domain; the sequence is GDIRIEDIPE…NNESAVKIIV (341 aa). The Zn(2+) site is built by Cys-37, His-71, and Glu-157.

The protein belongs to the zinc-containing alcohol dehydrogenase family. Zn(2+) is required as a cofactor.

It carries out the reaction (R,R)-butane-2,3-diol + NAD(+) = (R)-acetoin + NADH + H(+). The catalysed reaction is (S)-acetoin + NAD(+) = diacetyl + NADH + H(+). In terms of biological role, NAD-dependent butanediol dehydrogenase which catalyzes the oxidation of (R,R)-butane-2,3-diol to (3R)-acetoin and of meso-butane-2,3-diol to (3S)-acetoin. Preferentially oxidizes (R,R)-butane-2,3-diol, with a catalytic efficiency approximately fourfold higher than with meso-butane-2,3-diol. Shows a very low activity with (S,S)-butane-2,3-diol. Can also catalyze the reduction of (3R/3S)-acetoin and diacetyl in the presence of NADH. This Neisseria gonorrhoeae (strain ATCC 700825 / FA 1090) protein is (R,R)-butanediol dehydrogenase.